We begin with the raw amino-acid sequence, 371 residues long: Homeobox protein Nkx-2.1 (371 aa).

A DNA-binding region (homeobox) is located at residues 161-220; sequence RRKRRVLFSQAQVYELERRFKQQKYLSAPEREHLASMIHLTPTQVKIWFQNHRYKMKRQA. Disordered stretches follow at residues 219 to 294 and 310 to 339; these read QAKD…QHQA and GAGL…SPAA. Gly residues predominate over residues 233–243; that stretch reads SGGGGGGGGTG. Residues 244–253 show a composition bias toward low complexity; sequence CPQQQQAQQQ. Phosphoserine is present on Ser-254. Residues 272-294 are compositionally biased toward low complexity; that stretch reads AGAPAPGAASLQGHAQQQAQHQA.

This sequence belongs to the NK-2 homeobox family. In terms of assembly, interacts with WWTR1. Post-translationally, phosphorylated on serine residues by STK3/MST2. In terms of tissue distribution, thyroid and lung.

It localises to the nucleus. Its function is as follows. Transcription factor that binds and activates the promoter of thyroid specific genes such as thyroglobulin, thyroperoxidase, and thyrotropin receptor. Crucial in the maintenance of the thyroid differentiation phenotype. May play a role in lung development and surfactant homeostasis. Forms a regulatory loop with GRHL2 that coordinates lung epithelial cell morphogenesis and differentiation. Activates the transcription of GNRHR and plays a role in enhancing the circadian oscillation of its gene expression. Represses the transcription of the circadian transcriptional repressor NR1D1. The polypeptide is Homeobox protein Nkx-2.1 (Homo sapiens (Human)).